The primary structure comprises 164 residues: 16S rRNA aminocarboxypropyltransferase (164 aa).

T18, I66, L87, and S106 together coordinate S-adenosyl-L-methionine.

This sequence belongs to the TDD superfamily. TSR3 family.

The protein resides in the cytoplasm. The enzyme catalyses an N(1)-methylpseudouridine in rRNA + S-adenosyl-L-methionine = N(1)-methyl-N(3)-[(3S)-3-amino-3-carboxypropyl]pseudouridine in rRNA + S-methyl-5'-thioadenosine + H(+). In terms of biological role, aminocarboxypropyltransferase that catalyzes the aminocarboxypropyl transfer on pseudouridine corresponding to position 914 in M.jannaschii 16S rRNA. It constitutes the last step in biosynthesis of the hypermodified N1-methyl-N3-(3-amino-3-carboxypropyl) pseudouridine (m1acp3-Psi). This chain is 16S rRNA aminocarboxypropyltransferase, found in Thermoplasma volcanium (strain ATCC 51530 / DSM 4299 / JCM 9571 / NBRC 15438 / GSS1).